The primary structure comprises 157 residues: MAREVKLTKAGYERLMKQLEQERERLQEATKILQELMESSDDYDDSGLEAAKQEKARIEARIDSLEDVLSRAVILEEGTGEVIGLGSVVELEDPATGERLSVQVVSPAEASVLENPMKISDASPMGKALLGHRVGDVLSLDTPKGKKEFRVVAIHGR.

The stretch at 1–74 (MAREVKLTKA…LEDVLSRAVI (74 aa)) forms a coiled coil.

It belongs to the GreA/GreB family. As to quaternary structure, interacts with RNAP.

Its function is as follows. Inhibits all catalytic activities of RNA polymerase (RNAP) by partially occluding its substrate-binding site and preventing NTP binding. This is Transcription inhibitor protein Gfh1 (gfh1) from Thermus aquaticus.